Reading from the N-terminus, the 463-residue chain is Glycogen synthase (463 aa).

An ADP-alpha-D-glucose-binding site is contributed by Lys15.

It belongs to the glycosyltransferase 1 family. Bacterial/plant glycogen synthase subfamily.

It catalyses the reaction [(1-&gt;4)-alpha-D-glucosyl](n) + ADP-alpha-D-glucose = [(1-&gt;4)-alpha-D-glucosyl](n+1) + ADP + H(+). The protein operates within glycan biosynthesis; glycogen biosynthesis. Synthesizes alpha-1,4-glucan chains using ADP-glucose. The protein is Glycogen synthase of Aquifex aeolicus (strain VF5).